The primary structure comprises 765 residues: Protein suppressor of forked (765 aa).

7 HAT repeats span residues 46 to 78, 80 to 111, 118 to 153, 164 to 197, 230 to 262, 387 to 420, and 491 to 527; these read RPIH…MEMR, RYYE…YVKE, THKE…FLRG, QKIT…FEQN, GLNR…YEKS, LKYE…FARR, and NEDN…FESN. Disordered regions lie at residues 595-615 and 727-747; these read GAQS…PPLP and RRRR…TAVP. Ser738 is modified (phosphoserine).

In terms of assembly, probably interacts with an RNA-binding protein.

The protein resides in the nucleus. In terms of biological role, essential protein, may play a role in mRNA production or stability. The sequence is that of Protein suppressor of forked (su(f)) from Drosophila melanogaster (Fruit fly).